Reading from the N-terminus, the 336-residue chain is MGDLELGFKASAEQFGPRELVDIAVLAEEHGMDSATVSDHFQPWRHKGGHAPFSLAWMAAVGARTERIKLGTSVLTPTFRYNPAVIAQAFATMGCLYPGRVMLGVGTGEALNEIATGYQGEWPEFKERFARLREAVELMRALWTGDRVDFDGQYYRTVGASIYDVPEGGVPIYIAAGGPLVARYAGRAGDGFICTSGKGMELYTDKLMPAVAEGAAKAGRSVDSIDRMIEIKISYDTDPELALENTRFWAPLSLTAEQKHSITDPIEMEAAADALPIEQIAKRWIVASDPDQAVEQIKPYLDAGLNHLVFHAPGHDQRRFLDLFQRDLAPRLRALA.

Aspartate 39 is a coenzyme F420-(gamma-Glu)n binding site. The active-site Proton donor is the histidine 40. Coenzyme F420-(gamma-Glu)n is bound by residues threonine 76 and threonine 107–glycine 108. Glutamate 109 (proton acceptor) is an active-site residue. Coenzyme F420-(gamma-Glu)n is bound by residues asparagine 112, glycine 177–glycine 178, and leucine 180–valine 181. Threonine 195, lysine 198, lysine 259, and arginine 283 together coordinate substrate.

This sequence belongs to the F420-dependent glucose-6-phosphate dehydrogenase family. Homodimer.

It catalyses the reaction oxidized coenzyme F420-(gamma-L-Glu)(n) + D-glucose 6-phosphate + H(+) = 6-phospho-D-glucono-1,5-lactone + reduced coenzyme F420-(gamma-L-Glu)(n). Its function is as follows. Catalyzes the coenzyme F420-dependent oxidation of glucose 6-phosphate (G6P) to 6-phosphogluconolactone. This chain is F420-dependent glucose-6-phosphate dehydrogenase, found in Nocardia farcinica (strain IFM 10152).